A 547-amino-acid polypeptide reads, in one-letter code: Nuclear speckle splicing regulatory protein 1 (547 aa).

Residues 25–51 are disordered; that stretch reads KPSVFGNDSDDDEASVSESLQREAAKK. Phosphoserine is present on residues Ser27 and Ser33. Residues 103 to 177 are a coiled coil; it reads IHNLLKAVEI…EARLDVTKQK (75 aa). The interval 105–169 is necessary for alternative splicing activity; sequence NLLKAVEIRK…REKRAAALEA (65 aa). Residues 188–523 are disordered; sequence NQAVGEEAVP…KRSNEETVMS (336 aa). Residues Lys198 and Lys209 each participate in a glycyl lysine isopeptide (Lys-Gly) (interchain with G-Cter in SUMO2) cross-link. Over residues 200-217 the composition is skewed to basic and acidic residues; that stretch reads SFREARTVIKEEKLRGYP. A compositionally biased stretch (polar residues) spans 223–232; the sequence is ENRPQQNCAL. Over residues 237–254 the composition is skewed to acidic residues; it reads EEAEENPDADSDSEESCD. Ser247 and Ser252 each carry phosphoserine. Residues 255–269 are compositionally biased toward basic and acidic residues; the sequence is DGERGDHKVKSRGEE. An N6-acetyllysine modification is found at Lys276. Residues 277-287 are compositionally biased toward basic residues; it reads YLKHHKNHTHS. Lys279 is covalently cross-linked (Glycyl lysine isopeptide (Lys-Gly) (interchain with G-Cter in SUMO2)). Residues 308 to 339 are compositionally biased toward basic and acidic residues; the sequence is RGHEHKGGQHQDRQSRDQESCHKDRSHREEKS. The segment covering 340 to 355 has biased composition (basic residues); the sequence is SHRHREASHKDHHWKR. Composition is skewed to basic and acidic residues over residues 356–480 and 490–506; these read HEHE…KPPR and RLTEERPEKGSQPERPP. A coiled-coil region spans residues 376–417; sequence KREKYSSREQEKDRQWNDHDRYSEKEKKGKEKEEHRKARRER. Ser447 carries the post-translational modification Phosphoserine.

Belongs to the NSRP1 family. Interacts (via C-terminus) with SRSF1. Interacts (via C-terminus) with SRSF2.

It is found in the nucleus. It localises to the nucleus speckle. Functionally, RNA-binding protein that mediates pre-mRNA alternative splicing regulation. The protein is Nuclear speckle splicing regulatory protein 1 (Nsrp1) of Rattus norvegicus (Rat).